Reading from the N-terminus, the 750-residue chain is Photosystem I P700 chlorophyll a apoprotein A1 (750 aa).

The next 8 helical transmembrane spans lie at 70-93 (VFSA…FHGA), 156-179 (LYCT…FHYH), 195-219 (LNHH…HVSL), 291-309 (IAHH…GHMY), 346-369 (WHAQ…HHMY), 385-411 (LSLF…IFMV), 433-455 (AIIS…LYIH), and 531-549 (FLVH…LILL). 2 residues coordinate [4Fe-4S] cluster: C573 and C582. A run of 2 helical transmembrane segments spans residues 589–610 (HVFL…HFSW) and 664–686 (LSAY…MFLF). Position 675 (H675) interacts with chlorophyll a'. Residues M683 and Y691 each coordinate chlorophyll a. W692 contacts phylloquinone. The chain crosses the membrane as a helical span at residues 724–744 (AVGVTHYLLGGIATTWAFFLA).

It belongs to the PsaA/PsaB family. The PsaA/B heterodimer binds the P700 chlorophyll special pair and subsequent electron acceptors. PSI consists of a core antenna complex that captures photons, and an electron transfer chain that converts photonic excitation into a charge separation. The eukaryotic PSI reaction center is composed of at least 11 subunits. The cofactor is P700 is a chlorophyll a/chlorophyll a' dimer, A0 is one or more chlorophyll a, A1 is one or both phylloquinones and FX is a shared 4Fe-4S iron-sulfur center..

It localises to the plastid. The protein resides in the chloroplast thylakoid membrane. It carries out the reaction reduced [plastocyanin] + hnu + oxidized [2Fe-2S]-[ferredoxin] = oxidized [plastocyanin] + reduced [2Fe-2S]-[ferredoxin]. In terms of biological role, psaA and PsaB bind P700, the primary electron donor of photosystem I (PSI), as well as the electron acceptors A0, A1 and FX. PSI is a plastocyanin-ferredoxin oxidoreductase, converting photonic excitation into a charge separation, which transfers an electron from the donor P700 chlorophyll pair to the spectroscopically characterized acceptors A0, A1, FX, FA and FB in turn. Oxidized P700 is reduced on the lumenal side of the thylakoid membrane by plastocyanin. The chain is Photosystem I P700 chlorophyll a apoprotein A1 from Pelargonium hortorum (Common geranium).